The sequence spans 556 residues: Amidophosphoribosyltransferase (556 aa).

Positions 1-57 are excised as a propeptide; that stretch reads MCLAVGVGVRAPKHVPQIRRLGRAGRRLRCVTNCALGSCPIVTVQQPGRDFSSPREE. Residue cysteine 58 is the Nucleophile of the active site. The Glutamine amidotransferase type-2 domain maps to 58-284; it reads CGVFGVWAPG…PGELLAIDAD (227 aa). Residue cysteine 299 participates in [4Fe-4S] cluster binding. 3 residues coordinate Mg(2+): serine 346, aspartate 408, and aspartate 409. The [4Fe-4S] cluster site is built by cysteine 445, cysteine 501, and cysteine 504.

It in the C-terminal section; belongs to the purine/pyrimidine phosphoribosyltransferase family. Mg(2+) serves as cofactor. The cofactor is [4Fe-4S] cluster.

The enzyme catalyses 5-phospho-beta-D-ribosylamine + L-glutamate + diphosphate = 5-phospho-alpha-D-ribose 1-diphosphate + L-glutamine + H2O. It functions in the pathway purine metabolism; IMP biosynthesis via de novo pathway; N(1)-(5-phospho-D-ribosyl)glycinamide from 5-phospho-alpha-D-ribose 1-diphosphate: step 1/2. Functionally, catalyzes the formation of phosphoribosylamine from phosphoribosylpyrophosphate (PRPP) and glutamine. The protein is Amidophosphoribosyltransferase of Mycobacterium leprae (strain TN).